The chain runs to 239 residues: tRNA1(Val) (adenine(37)-N6)-methyltransferase (239 aa).

This sequence belongs to the methyltransferase superfamily. tRNA (adenine-N(6)-)-methyltransferase family.

The protein localises to the cytoplasm. The enzyme catalyses adenosine(37) in tRNA1(Val) + S-adenosyl-L-methionine = N(6)-methyladenosine(37) in tRNA1(Val) + S-adenosyl-L-homocysteine + H(+). In terms of biological role, specifically methylates the adenine in position 37 of tRNA(1)(Val) (anticodon cmo5UAC). This is tRNA1(Val) (adenine(37)-N6)-methyltransferase from Vibrio parahaemolyticus serotype O3:K6 (strain RIMD 2210633).